We begin with the raw amino-acid sequence, 651 residues long: Bromodomain-containing protein 7 (651 aa).

A Glycyl lysine isopeptide (Lys-Gly) (interchain with G-Cter in SUMO2) cross-link involves residue K21. Residues 34-103 form a disordered region; the sequence is VTELSTGSSG…RDRAENEVDR (70 aa). The segment covering 35–45 has biased composition (polar residues); the sequence is TELSTGSSGHD. Residues 47 to 57 are compositionally biased toward basic and acidic residues; that stretch reads SLFEDRSDHDK. Over residues 58–69 the composition is skewed to basic residues; it reads HKDRKRKKRKKG. A Nuclear localization signal motif is present at residues 65–96; sequence KRKKGEKQAPGEEKGRKRRRVKEDKKKRDRDR. Over residues 70–103 the composition is skewed to basic and acidic residues; that stretch reads EKQAPGEEKGRKRRRVKEDKKKRDRDRAENEVDR. Residues K127, K186, K197, K201, K212, and K241 each participate in a glycyl lysine isopeptide (Lys-Gly) (interchain with G-Cter in SUMO2) cross-link. A Bromo domain is found at 131-235; it reads VEQTPLQEAL…HSGMKILSQE (105 aa). The tract at residues 252–316 is disordered; it reads KTRKQKERTD…RSSNSEREHE (65 aa). S279 and S289 each carry phosphoserine. The segment covering 290-316 has biased composition (basic and acidic residues); sequence PAKDNKRKDKDVLEDKWRSSNSEREHE. A Glycyl lysine isopeptide (Lys-Gly) (interchain with G-Cter in SUMO2) cross-link involves residue K305. K328 is modified (N6-acetyllysine). A Glycyl lysine isopeptide (Lys-Gly) (interchain with G-Cter in SUMO2) cross-link involves residue K344. Residue S380 is modified to Phosphoserine. A Glycyl lysine isopeptide (Lys-Gly) (interchain with G-Cter in SUMO2) cross-link involves residue K389. 3 positions are modified to phosphoserine: S475, S482, and S483. The stretch at 536-567 forms a coiled coil; it reads SEEAEVFQRKLDETTRLLRELQEAQNERLSTR. A Phosphoserine modification is found at S621.

In terms of assembly, interacts with IRF2 and HNRPUL1. Interacts (via N-terminus) with TP53. Interacts (via C-terminus) with EP300. Interacts with BRCA1. Interacts (via bromo domain) with histone H3 (via N-terminus) acetylated at 'Lys-14' (H3K14ac). Has low affinity for histone H3 acetylated at 'Lys-9' (H3K9ac). Has the highest affinity for histone H3 that is acetylated both at 'Lys-9' (H3K9ac) and at 'Lys-14' (H3K14ac). Has very low affinity for non-acetylated histone H3. Interacts (via bromo domain) with histone H4 (via N-terminus) acetylated at 'Lys-8' (H3K8ac) (in vitro). Interacts with TRIM24, PTPN13 and DVL1. Identified in a complex with SMARCA4/BRG1, SMARCC1/BAF155, SMARCE1/BAF57, DPF2/BAF45D and ARID2, subunits of the SWI/SNF-B (PBAF) chromatin remodeling complex. As to expression, ubiquitous.

It is found in the nucleus. Its subcellular location is the chromosome. Functionally, acts both as coactivator and as corepressor. May play a role in chromatin remodeling. Transcriptional corepressor that down-regulates the expression of target genes. Binds to target promoters, leading to increased histone H3 acetylation at 'Lys-9' (H3K9ac). Binds to the ESR1 promoter. Recruits BRCA1 and POU2F1 to the ESR1 promoter. Coactivator for TP53-mediated activation of transcription of a set of target genes. Required for TP53-mediated cell-cycle arrest in response to oncogene activation. Promotes acetylation of TP53 at 'Lys-382', and thereby promotes efficient recruitment of TP53 to target promoters. Inhibits cell cycle progression from G1 to S phase. Activator of the Wnt signaling pathway in a DVL1-dependent manner by negatively regulating the GSK3B phosphotransferase activity. Induces dephosphorylation of GSK3B at 'Tyr-216'. Down-regulates TRIM24-mediated activation of transcriptional activation by AR. The polypeptide is Bromodomain-containing protein 7 (Brd7) (Mus musculus (Mouse)).